Here is a 129-residue protein sequence, read N- to C-terminus: MAKKTVAAKKRNVKVDANGQLHVHSSFNNIIVSLANSEGQIISWSSAGKMGFRGSKKNTPYAAQMAAQDCAKIAFDLGLRKVKAYVKGPGNGRESAIRTIHGAGIEVTEIIDVTPLPHNGCRPPKRRRV.

Belongs to the universal ribosomal protein uS11 family. As to quaternary structure, part of the 30S ribosomal subunit. Interacts with proteins S7 and S18. Binds to IF-3.

In terms of biological role, located on the platform of the 30S subunit, it bridges several disparate RNA helices of the 16S rRNA. Forms part of the Shine-Dalgarno cleft in the 70S ribosome. This is Small ribosomal subunit protein uS11 from Bacteroides thetaiotaomicron (strain ATCC 29148 / DSM 2079 / JCM 5827 / CCUG 10774 / NCTC 10582 / VPI-5482 / E50).